A 75-amino-acid polypeptide reads, in one-letter code: UPF0270 protein PST_1436 (75 aa).

This sequence belongs to the UPF0270 family.

This chain is UPF0270 protein PST_1436, found in Stutzerimonas stutzeri (strain A1501) (Pseudomonas stutzeri).